The sequence spans 633 residues: DNA mismatch repair protein MutL (633 aa).

2 disordered regions span residues Val336–Gly364 and Gly384–Glu405. Over residues Gly388 to Tyr401 the composition is skewed to low complexity.

This sequence belongs to the DNA mismatch repair MutL/HexB family.

Its function is as follows. This protein is involved in the repair of mismatches in DNA. It is required for dam-dependent methyl-directed DNA mismatch repair. May act as a 'molecular matchmaker', a protein that promotes the formation of a stable complex between two or more DNA-binding proteins in an ATP-dependent manner without itself being part of a final effector complex. In Pseudomonas paraeruginosa (strain DSM 24068 / PA7) (Pseudomonas aeruginosa (strain PA7)), this protein is DNA mismatch repair protein MutL.